Consider the following 140-residue polypeptide: Small ribosomal subunit protein uS12m (140 aa).

Belongs to the universal ribosomal protein uS12 family.

The protein localises to the mitochondrion. The chain is Small ribosomal subunit protein uS12m (mrps12) from Dictyostelium discoideum (Social amoeba).